The chain runs to 398 residues: MAKSQRTAVVLVAAGRGLRAGAGGPKQYREIGGQPVIYRAMEAFSRHPDVFAVQPVVNPDDSAMFTAAVAGLKHEPPTNGGATRQASVLAGLEALAKHQPDIVLIHDAARPFVSDGVISRAIDAASRTGAAIPVVPVTDTIKLTGASGNVEDTPDRARLRIAQTPQSFRFDVILEAHRRAAKDGRSDFTDDAAIAEWAGLTVATFEGDVANMKLTTPEDFVREEARLAAQLGDIRTGTGYDVHAFGEGDHVMICGVRVPHSKGFLAHSDGDVGLHALVDAILGALADGDIGSHFPPSDAKWKGASSDQFLKYAIERVAQRGGRVANLEVTMICERPKIGPLRDTMRARIAEISGVDISRVAVKATTSERLGFTGREEGIAATASATIRLPFNEKTWSV.

The 2-C-methyl-D-erythritol 4-phosphate cytidylyltransferase stretch occupies residues Met1 to Ile234. Residues Arg235–Val398 are 2-C-methyl-D-erythritol 2,4-cyclodiphosphate synthase. 2 residues coordinate a divalent metal cation: Asp241 and His243. 4-CDP-2-C-methyl-D-erythritol 2-phosphate-binding positions include Asp241 to His243 and His267 to Ser268. An a divalent metal cation-binding site is contributed by His275. 4-CDP-2-C-methyl-D-erythritol 2-phosphate is bound by residues Asp289–Gly291, Thr365–Glu368, Phe372, and Arg375.

This sequence in the N-terminal section; belongs to the IspD/TarI cytidylyltransferase family. IspD subfamily. It in the C-terminal section; belongs to the IspF family. A divalent metal cation is required as a cofactor.

The catalysed reaction is 2-C-methyl-D-erythritol 4-phosphate + CTP + H(+) = 4-CDP-2-C-methyl-D-erythritol + diphosphate. The enzyme catalyses 4-CDP-2-C-methyl-D-erythritol 2-phosphate = 2-C-methyl-D-erythritol 2,4-cyclic diphosphate + CMP. It participates in isoprenoid biosynthesis; isopentenyl diphosphate biosynthesis via DXP pathway; isopentenyl diphosphate from 1-deoxy-D-xylulose 5-phosphate: step 2/6. Its pathway is isoprenoid biosynthesis; isopentenyl diphosphate biosynthesis via DXP pathway; isopentenyl diphosphate from 1-deoxy-D-xylulose 5-phosphate: step 4/6. Its function is as follows. Bifunctional enzyme that catalyzes the formation of 4-diphosphocytidyl-2-C-methyl-D-erythritol from CTP and 2-C-methyl-D-erythritol 4-phosphate (MEP) (IspD), and catalyzes the conversion of 4-diphosphocytidyl-2-C-methyl-D-erythritol 2-phosphate (CDP-ME2P) to 2-C-methyl-D-erythritol 2,4-cyclodiphosphate (ME-CPP) with a corresponding release of cytidine 5-monophosphate (CMP) (IspF). The sequence is that of Bifunctional enzyme IspD/IspF from Bradyrhizobium diazoefficiens (strain JCM 10833 / BCRC 13528 / IAM 13628 / NBRC 14792 / USDA 110).